The sequence spans 518 residues: Protein FAM98A (518 aa).

2 disordered regions span residues 300-415 (GRVP…GHSS) and 434-518 (GSGY…HYTS). Over residues 302 to 311 (VPDRGGRPNE) the composition is skewed to basic and acidic residues. 3 stretches are compositionally biased toward gly residues: residues 349-364 (GGRGGHEQGGGRGGRG), 383-396 (WTDGGSGGGGGYQD), and 405-415 (QPGGYHGGHSS). Positions 447 to 459 (RYQDGGHHGDRGG) are enriched in basic and acidic residues. Positions 460–484 (GRGGRGGRGGRGGRAGQGGGWGGRG) are enriched in gly residues. The segment covering 488-504 (YHQGGQFEQHFQHGGYQ) has biased composition (low complexity). Residues 505 to 518 (YNHSGFGQGRHYTS) show a composition bias toward polar residues.

The protein belongs to the FAM98 family. In terms of assembly, interacts (via N- and C-terminus) with DDX1. Interacts (via N- and C-terminus) with C14orf166. Interacts with FAM98B. Interacts with PLEKHM1 (via N- and C-terminus).

Functionally, positively stimulates PRMT1-induced protein arginine methylation. Involved in skeletal homeostasis. Positively regulates lysosome peripheral distribution and ruffled border formation in osteoclasts. This is Protein FAM98A from Pongo abelii (Sumatran orangutan).